The primary structure comprises 216 residues: V-type ATP synthase subunit D (216 aa).

The protein belongs to the V-ATPase D subunit family.

Its function is as follows. Produces ATP from ADP in the presence of a proton gradient across the membrane. The sequence is that of V-type ATP synthase subunit D from Clostridium botulinum (strain Loch Maree / Type A3).